The following is a 309-amino-acid chain: Protoheme IX farnesyltransferase (309 aa).

The next 9 membrane-spanning stretches (helical) occupy residues 35 to 55 (IGIV…AFYF), 64 to 84 (LHLV…SCAI), 114 to 134 (VLWL…MTTV), 135 to 155 (TAAV…TLWT), 161 to 181 (INTV…WTAV), 187 to 207 (IVPL…FLAL), 231 to 251 (MTKR…FYLF), 253 to 273 (LGVP…LLGL), and 289 to 309 (FVYS…ATLW).

Belongs to the UbiA prenyltransferase family. Protoheme IX farnesyltransferase subfamily. In terms of assembly, interacts with CtaA.

It is found in the cell membrane. It catalyses the reaction heme b + (2E,6E)-farnesyl diphosphate + H2O = Fe(II)-heme o + diphosphate. The protein operates within porphyrin-containing compound metabolism; heme O biosynthesis; heme O from protoheme: step 1/1. Its function is as follows. Converts heme B (protoheme IX) to heme O by substitution of the vinyl group on carbon 2 of heme B porphyrin ring with a hydroxyethyl farnesyl side group. This is Protoheme IX farnesyltransferase from Geobacillus kaustophilus (strain HTA426).